Consider the following 160-residue polypeptide: SsrA-binding protein (160 aa).

This sequence belongs to the SmpB family.

It localises to the cytoplasm. In terms of biological role, required for rescue of stalled ribosomes mediated by trans-translation. Binds to transfer-messenger RNA (tmRNA), required for stable association of tmRNA with ribosomes. tmRNA and SmpB together mimic tRNA shape, replacing the anticodon stem-loop with SmpB. tmRNA is encoded by the ssrA gene; the 2 termini fold to resemble tRNA(Ala) and it encodes a 'tag peptide', a short internal open reading frame. During trans-translation Ala-aminoacylated tmRNA acts like a tRNA, entering the A-site of stalled ribosomes, displacing the stalled mRNA. The ribosome then switches to translate the ORF on the tmRNA; the nascent peptide is terminated with the 'tag peptide' encoded by the tmRNA and targeted for degradation. The ribosome is freed to recommence translation, which seems to be the essential function of trans-translation. The sequence is that of SsrA-binding protein from Chloroflexus aurantiacus (strain ATCC 29364 / DSM 637 / Y-400-fl).